A 322-amino-acid polypeptide reads, in one-letter code: N-acetyl-gamma-glutamyl-phosphate reductase (322 aa).

Residue Cys132 is part of the active site.

It belongs to the NAGSA dehydrogenase family. Type 1 subfamily.

It localises to the cytoplasm. The enzyme catalyses N-acetyl-L-glutamate 5-semialdehyde + phosphate + NADP(+) = N-acetyl-L-glutamyl 5-phosphate + NADPH + H(+). The protein operates within amino-acid biosynthesis; L-arginine biosynthesis; N(2)-acetyl-L-ornithine from L-glutamate: step 3/4. In terms of biological role, catalyzes the NADPH-dependent reduction of N-acetyl-5-glutamyl phosphate to yield N-acetyl-L-glutamate 5-semialdehyde. This chain is N-acetyl-gamma-glutamyl-phosphate reductase, found in Parabacteroides distasonis (strain ATCC 8503 / DSM 20701 / CIP 104284 / JCM 5825 / NCTC 11152).